Reading from the N-terminus, the 77-residue chain is Protein AC43 (77 aa).

Its function is as follows. Plays a role in the production of occlusion bodies as well as expression of the polyhedrin gene. The polypeptide is Protein AC43 (Autographa californica nuclear polyhedrosis virus (AcMNPV)).